Reading from the N-terminus, the 492-residue chain is ATP synthase subunit beta, chloroplastic (492 aa).

170 to 177 (GGAGVGKT) provides a ligand contact to ATP.

Belongs to the ATPase alpha/beta chains family. F-type ATPases have 2 components, CF(1) - the catalytic core - and CF(0) - the membrane proton channel. CF(1) has five subunits: alpha(3), beta(3), gamma(1), delta(1), epsilon(1). CF(0) has four main subunits: a(1), b(1), b'(1) and c(9-12).

It is found in the plastid. Its subcellular location is the chloroplast thylakoid membrane. The catalysed reaction is ATP + H2O + 4 H(+)(in) = ADP + phosphate + 5 H(+)(out). In terms of biological role, produces ATP from ADP in the presence of a proton gradient across the membrane. The catalytic sites are hosted primarily by the beta subunits. In Pinus thunbergii (Japanese black pine), this protein is ATP synthase subunit beta, chloroplastic.